The primary structure comprises 562 residues: Arginine--tRNA ligase (562 aa).

Positions 121-131 match the 'HIGH' region motif; that stretch reads PNIAKPFSVGH.

The protein belongs to the class-I aminoacyl-tRNA synthetase family. In terms of assembly, monomer.

The protein resides in the cytoplasm. The enzyme catalyses tRNA(Arg) + L-arginine + ATP = L-arginyl-tRNA(Arg) + AMP + diphosphate. This Streptococcus uberis (strain ATCC BAA-854 / 0140J) protein is Arginine--tRNA ligase.